The sequence spans 604 residues: Glucose oxidase 2 (604 aa).

A signal peptide spans 1-16 (MKLLGLLSGLVVVATA). Residues L49 and T50 each contribute to the FAD site. N-linked (GlcNAc...) asparagine glycosylation occurs at N63. E70 provides a ligand contact to FAD. Residue N109 is glycosylated (N-linked (GlcNAc...) asparagine). S123, N127, G128, and S130 together coordinate FAD. C184 and C226 are oxidised to a cystine. The N-linked (GlcNAc...) asparagine glycan is linked to N214. FAD is bound at residue V270. N-linked (GlcNAc...) asparagine glycosylation is found at N375, N408, and N517. H536 serves as the catalytic Proton acceptor. Residues R557 and V558 each coordinate O2. 2 residues coordinate FAD: G569 and M581. Residue N600 is glycosylated (N-linked (GlcNAc...) asparagine).

This sequence belongs to the GMC oxidoreductase family. In terms of assembly, homodimer. It depends on FAD as a cofactor.

The protein resides in the secreted. It is found in the cell wall. It localises to the cytoplasm. Its subcellular location is the extracellular space. The protein localises to the extracellular matrix. The enzyme catalyses beta-D-glucose + O2 = D-glucono-1,5-lactone + H2O2. Glucose oxidase catalyzes the oxidation of beta-D-glucose to D-glucono-delta-lactone and hydrogen peroxide in the presence of molecular oxygen. D-glucono-delta-lactone is sequentially hydrolyzed by lactonase to D-gluconic acid, and the resulting hydrogen peroxide is hydrolyzed by catalase to oxygen and water. Acts as a key factor contributing to fungal disease of apple. The production of gluconic acid leads to host tissue acidification that enhances the expression of pectolytic enzymes and the establishment of conditions for necrotrophic development of P.expansum. This Penicillium expansum (Blue mold rot fungus) protein is Glucose oxidase 2.